We begin with the raw amino-acid sequence, 418 residues long: Queuine tRNA-ribosyltransferase accessory subunit 2 (418 aa).

Positions 325, 327, 330, and 356 each coordinate Zn(2+).

The protein belongs to the queuine tRNA-ribosyltransferase family. QTRT2 subfamily. As to quaternary structure, heterodimer of a catalytic subunit and an accessory subunit. Zn(2+) serves as cofactor.

Its subcellular location is the cytoplasm. Non-catalytic subunit of the queuine tRNA-ribosyltransferase (TGT) that catalyzes the base-exchange of a guanine (G) residue with queuine (Q) at position 34 (anticodon wobble position) in tRNAs with GU(N) anticodons (tRNA-Asp, -Asn, -His and -Tyr), resulting in the hypermodified nucleoside queuosine (7-(((4,5-cis-dihydroxy-2-cyclopenten-1-yl)amino)methyl)-7-deazaguanosine). This is Queuine tRNA-ribosyltransferase accessory subunit 2 from Drosophila sechellia (Fruit fly).